We begin with the raw amino-acid sequence, 109 residues long: Nascent polypeptide-associated complex protein (109 aa).

In terms of domain architecture, NAC-A/B spans 3 to 70 (PMNPKQMKKM…YEVVKRPPKI (68 aa)).

The protein belongs to the NAC-alpha family. Homodimer. Interacts with the ribosome. Binds ribosomal RNA.

Its function is as follows. Contacts the emerging nascent chain on the ribosome. This is Nascent polypeptide-associated complex protein from Archaeoglobus fulgidus (strain ATCC 49558 / DSM 4304 / JCM 9628 / NBRC 100126 / VC-16).